Reading from the N-terminus, the 916-residue chain is Isoleucine--tRNA ligase (916 aa).

Residues 57 to 67 carry the 'HIGH' region motif; it reads PYANGNLHMGH. Position 554 (Glu-554) interacts with L-isoleucyl-5'-AMP. The 'KMSKS' region signature appears at 595-599; the sequence is KMSKS. An ATP-binding site is contributed by Lys-598. 4 residues coordinate Zn(2+): Cys-885, Cys-888, Cys-905, and Cys-908.

The protein belongs to the class-I aminoacyl-tRNA synthetase family. IleS type 1 subfamily. As to quaternary structure, monomer. Zn(2+) serves as cofactor.

It is found in the cytoplasm. It catalyses the reaction tRNA(Ile) + L-isoleucine + ATP = L-isoleucyl-tRNA(Ile) + AMP + diphosphate. Catalyzes the attachment of isoleucine to tRNA(Ile). As IleRS can inadvertently accommodate and process structurally similar amino acids such as valine, to avoid such errors it has two additional distinct tRNA(Ile)-dependent editing activities. One activity is designated as 'pretransfer' editing and involves the hydrolysis of activated Val-AMP. The other activity is designated 'posttransfer' editing and involves deacylation of mischarged Val-tRNA(Ile). In Staphylococcus epidermidis (strain ATCC 35984 / DSM 28319 / BCRC 17069 / CCUG 31568 / BM 3577 / RP62A), this protein is Isoleucine--tRNA ligase (ileS).